The chain runs to 116 residues: Ribosome-binding factor A (116 aa).

It belongs to the RbfA family. Monomer. Binds 30S ribosomal subunits, but not 50S ribosomal subunits or 70S ribosomes.

The protein resides in the cytoplasm. In terms of biological role, one of several proteins that assist in the late maturation steps of the functional core of the 30S ribosomal subunit. Associates with free 30S ribosomal subunits (but not with 30S subunits that are part of 70S ribosomes or polysomes). Required for efficient processing of 16S rRNA. May interact with the 5'-terminal helix region of 16S rRNA. The protein is Ribosome-binding factor A of Staphylococcus aureus (strain JH9).